The following is a 304-amino-acid chain: Carbonic anhydrase 5A, mitochondrial (304 aa).

Residues 1 to 34 (MLRAKMLGRGPYKPLAILRHMGPLCATRPQHWRF) constitute a mitochondrion transit peptide. The region spanning 35–295 (QHSYAEKHSN…LRGRNVRSSF (261 aa)) is the Alpha-carbonic anhydrase domain. Zn(2+)-binding residues include His-129, His-131, and His-154.

Belongs to the alpha-carbonic anhydrase family. Zn(2+) is required as a cofactor. In terms of tissue distribution, high in liver, also detected in heart, lung, kidney, spleen and intestine.

It localises to the mitochondrion. The enzyme catalyses hydrogencarbonate + H(+) = CO2 + H2O. Its function is as follows. Mitochondrial carbonic anhydrase that catalyzes the reversible conversion of carbon dioxide to bicarbonate/HCO3. Mitochondria are impermeable to HCO3, and thus this intramitochondrial carbonic anhydrase is pivotal in providing HCO3 for multiple mitochondrial enzymes that catalyze the formation of essential metabolites of intermediary metabolism in the urea and Krebs cycles. The polypeptide is Carbonic anhydrase 5A, mitochondrial (Rattus norvegicus (Rat)).